The chain runs to 191 residues: NAD(P)H dehydrogenase (quinone) (191 aa).

The Flavodoxin-like domain maps to 4–184 (ILVIFHSITG…VAKMLGKRVA (181 aa)). FMN-binding positions include 10–15 (SITGNT), 83–85 (TRF), and 118–124 (SNEMPHG).

The protein belongs to the WrbA family. Homodimer and homotetramer; in equilibrium. FMN is required as a cofactor.

It catalyses the reaction a quinone + NADH + H(+) = a quinol + NAD(+). The enzyme catalyses a quinone + NADPH + H(+) = a quinol + NADP(+). Functionally, it seems to function in response to environmental stress when various electron transfer chains are affected or when the environment is highly oxidizing. It reduces quinones to the hydroquinone state to prevent interaction of the semiquinone with O2 and production of superoxide. It prefers NADH over NADPH. In Archaeoglobus fulgidus (strain ATCC 49558 / DSM 4304 / JCM 9628 / NBRC 100126 / VC-16), this protein is NAD(P)H dehydrogenase (quinone).